A 463-amino-acid chain; its full sequence is L-seryl-tRNA(Sec) selenium transferase (463 aa).

Lysine 295 is modified (N6-(pyridoxal phosphate)lysine).

This sequence belongs to the SelA family. In terms of assembly, homodecamer; pentamer of dimers. Binds only one seryl-tRNA(Sec) per dimer. It depends on pyridoxal 5'-phosphate as a cofactor.

The protein localises to the cytoplasm. It carries out the reaction L-seryl-tRNA(Sec) + selenophosphate + H(+) = L-selenocysteinyl-tRNA(Sec) + phosphate. Its pathway is aminoacyl-tRNA biosynthesis; selenocysteinyl-tRNA(Sec) biosynthesis; selenocysteinyl-tRNA(Sec) from L-seryl-tRNA(Sec) (bacterial route): step 1/1. Functionally, converts seryl-tRNA(Sec) to selenocysteinyl-tRNA(Sec) required for selenoprotein biosynthesis. The sequence is that of L-seryl-tRNA(Sec) selenium transferase from Edwardsiella ictaluri (strain 93-146).